Reading from the N-terminus, the 243-residue chain is Phosphate-specific transport system accessory protein PhoU (243 aa).

This sequence belongs to the PhoU family. Homodimer. Interacts with phosphate regulon transcriptional regulatory protein PhoB and ferric uptake regulation protein Fur.

It localises to the cytoplasm. Its function is as follows. Part of the phosphate (Pho) regulon, which plays a key role in phosphate homeostasis. Encoded together with proteins of the phosphate-specific transport (Pst) system in the polycistronic pstSCAB-phoU operon. PhoU is essential for the repression of the Pho regulon at high phosphate conditions. In this role, it may bind, possibly as a chaperone, to PhoR, PhoB or a PhoR-PhoB complex to promote dephosphorylation of phospho-PhoB, or inhibit formation of the PhoR-PhoB transitory complex. The polypeptide is Phosphate-specific transport system accessory protein PhoU (Edwardsiella tarda).